Reading from the N-terminus, the 129-residue chain is Putative transmembrane protein 10 (129 aa).

The next 3 membrane-spanning stretches (helical) occupy residues 3–23 (NFSY…AFAG), 27–47 (LLVG…LSSL), and 85–105 (SSVL…FFVF).

It localises to the host membrane. This is Putative transmembrane protein 10 (SIFV0010) from Sulfolobus islandicus filamentous virus (isolate Iceland/Hveragerdi) (SIFV).